A 313-amino-acid chain; its full sequence is Putative S-adenosyl-L-methionine-dependent methyltransferase MAP_3563 (313 aa).

Residues Asp139 and 168-169 (DL) contribute to the S-adenosyl-L-methionine site.

This sequence belongs to the UPF0677 family.

Its function is as follows. Exhibits S-adenosyl-L-methionine-dependent methyltransferase activity. In Mycolicibacterium paratuberculosis (strain ATCC BAA-968 / K-10) (Mycobacterium paratuberculosis), this protein is Putative S-adenosyl-L-methionine-dependent methyltransferase MAP_3563.